A 357-amino-acid chain; its full sequence is Sorbitol dehydrogenase (357 aa).

Residue Ala2 is modified to N-acetylalanine. Cys45 contributes to the Zn(2+) binding site. Tyr51 contacts substrate. 3 residues coordinate Zn(2+): His70, Glu71, and Glu156. A substrate-binding site is contributed by Glu156. Ser169 is subject to Phosphoserine. NAD(+)-binding positions include Ile184, Asp204, Arg209, 273-275, and 297-299; these read VGM and VFR. Substrate is bound by residues Arg299 and Tyr300.

Belongs to the zinc-containing alcohol dehydrogenase family. Homotetramer; dimer of dimers. Requires Zn(2+) as cofactor. As to expression, expressed in liver and testis.

It is found in the mitochondrion membrane. Its subcellular location is the cell projection. The protein resides in the cilium. It localises to the flagellum. It catalyses the reaction keto-D-fructose + NADH + H(+) = D-sorbitol + NAD(+). The catalysed reaction is xylitol + NAD(+) = D-xylulose + NADH + H(+). It carries out the reaction L-iditol + NAD(+) = keto-L-sorbose + NADH + H(+). Functionally, polyol dehydrogenase that catalyzes the reversible NAD(+)-dependent oxidation of various sugar alcohols. Is active with D-sorbitol (D-glucitol) leading to the C2-oxidized product D-fructose. Is a key enzyme in the polyol pathway that interconverts glucose and fructose via sorbitol, which constitutes an important alternate route for glucose metabolism. May play a role in sperm motility by using sorbitol as an alternative energy source for sperm motility. This Rattus norvegicus (Rat) protein is Sorbitol dehydrogenase (Sord).